The sequence spans 240 residues: MGGCVGRPQGESQRSQSRASGQQRKRAGRNEPLKKERPRWKSDYPMTDGQLRSKRDEFWDTAPAFEGRKEIWDALKAAAFAVEANDHELAQAIVDGASITLPHGSLTECYDELGTRYQLPVYCLAPPVNLIMERSEEDGTDALEPAPNTRREFQLKVRLSTGKDVKLNASMVDTIGQLKKQLHAVEGIEPCWQRWFFFWEASHRQNEAPGDEDPERLRDTSYCKPATRDTKLNWHNAQQI.

Residues 1–48 form a disordered region; it reads MGGCVGRPQGESQRSQSRASGQQRKRAGRNEPLKKERPRWKSDYPMTD. The span at 12–22 shows a compositional bias: low complexity; that stretch reads SQRSQSRASGQ. The span at 28-42 shows a compositional bias: basic and acidic residues; sequence GRNEPLKKERPRWKS. The 76-residue stretch at 153 to 228 folds into the Ubiquitin-like domain; it reads FQLKVRLSTG…DTSYCKPATR (76 aa).

Its function is as follows. May be involved in the regulation of cellular senescence through a positive feedback loop with TP53. This is Ubiquitin domain-containing protein 1 (ubtd1) from Xenopus tropicalis (Western clawed frog).